A 287-amino-acid chain; its full sequence is ATP synthase gamma chain (287 aa).

The protein belongs to the ATPase gamma chain family. As to quaternary structure, F-type ATPases have 2 components, CF(1) - the catalytic core - and CF(0) - the membrane proton channel. CF(1) has five subunits: alpha(3), beta(3), gamma(1), delta(1), epsilon(1). CF(0) has three main subunits: a, b and c.

It localises to the cell inner membrane. Produces ATP from ADP in the presence of a proton gradient across the membrane. The gamma chain is believed to be important in regulating ATPase activity and the flow of protons through the CF(0) complex. This is ATP synthase gamma chain from Stenotrophomonas maltophilia (strain K279a).